A 238-amino-acid chain; its full sequence is MAFTFKQFHIDDMNCGMAVGTDSVVLGAWAQLTAAKTVLDIGAGSGLLSLMAAQRSQAHITSVELDTSAAEACQHNFHNSPWANRLTLVNSSIQDFCQQIEYQEYFDHIICNPPYFEQGTQAIQSQRAMARHTDSLSFAALLDAIHVCLAPQGNASLILPMQSMARFNEILAHSQLSLIEITNLISIVGKSANRVLCVLAHKTHPQIATKISDITIRELSGQYTQTMVQLIRDFYLKY.

It belongs to the methyltransferase superfamily. tRNA (adenine-N(6)-)-methyltransferase family.

It localises to the cytoplasm. The enzyme catalyses adenosine(37) in tRNA1(Val) + S-adenosyl-L-methionine = N(6)-methyladenosine(37) in tRNA1(Val) + S-adenosyl-L-homocysteine + H(+). Its function is as follows. Specifically methylates the adenine in position 37 of tRNA(1)(Val) (anticodon cmo5UAC). The sequence is that of tRNA1(Val) (adenine(37)-N6)-methyltransferase from Shewanella baltica (strain OS195).